The following is a 627-amino-acid chain: Chaperone protein HtpG (627 aa).

Positions 1 to 343 (MATQEFQAET…SEDLSLNISR (343 aa)) are a; substrate-binding. Residues 344–553 (EMLQQDKQLK…EGEISIEMEK (210 aa)) are b. The interval 554–627 (VLQSMPNNQN…YTNNVCKIMS (74 aa)) is c.

It belongs to the heat shock protein 90 family. Homodimer.

It is found in the cytoplasm. Its function is as follows. Molecular chaperone. Has ATPase activity. This is Chaperone protein HtpG from Natranaerobius thermophilus (strain ATCC BAA-1301 / DSM 18059 / JW/NM-WN-LF).